A 149-amino-acid polypeptide reads, in one-letter code: DnaJ homolog subfamily C member 24 (149 aa).

One can recognise a J domain in the interval 11-82 (DWYSILGADP…ETKKEYDLQR (72 aa)). A DPH-type MB domain is found at 93–148 (VDARIYLEEMSWNEDDHSFSLSCRCGGKYSVSKDEAEEVTLISCDTCSLIIELLHY). Residues C115, C117, C136, and C139 each coordinate Zn(2+).

This sequence belongs to the DPH4 family. In terms of assembly, monomer and homooligomer. Iron binding promotes oligomerization.

It is found in the cytoplasm. It localises to the cytoskeleton. It functions in the pathway protein modification; peptidyl-diphthamide biosynthesis. Functionally, stimulates the ATPase activity of several Hsp70-type chaperones. This ability is enhanced by iron-binding. The iron-bound form is redox-active and can function as electron carrier. Plays a role in the diphthamide biosynthesis, a post-translational modification of histidine which occurs in translation elongation factor 2 (EEF2). This Bos taurus (Bovine) protein is DnaJ homolog subfamily C member 24 (DNAJC24).